A 216-amino-acid polypeptide reads, in one-letter code: 3-keto-L-gulonate-6-phosphate decarboxylase UlaD (216 aa).

Asp-11 contributes to the substrate binding site. Mg(2+)-binding residues include Glu-33 and Asp-62. Substrate is bound at residue Arg-192.

This sequence belongs to the HPS/KGPDC family. KGPDC subfamily. As to quaternary structure, homodimer. Mg(2+) is required as a cofactor.

The catalysed reaction is 3-dehydro-L-gulonate 6-phosphate + H(+) = L-xylulose 5-phosphate + CO2. Its pathway is cofactor degradation; L-ascorbate degradation; D-xylulose 5-phosphate from L-ascorbate: step 2/4. Catalyzes the decarboxylation of 3-keto-L-gulonate-6-P into L-xylulose-5-P. Is involved in the anaerobic L-ascorbate utilization. The protein is 3-keto-L-gulonate-6-phosphate decarboxylase UlaD of Escherichia coli O139:H28 (strain E24377A / ETEC).